The following is a 300-amino-acid chain: Lysenin-related protein 2 (300 aa).

The tract at residues 12 to 35 (EQIEVDVVAVWKEGYVYENRGSTS) is N-terminal cap domain. A beta-hairpin domain region spans residues 36-109 (VEQKIKITKG…SKEIEHTITI (74 aa)). The N-terminal cap domain stretch occupies residues 110–158 (PPTSKFTRWQLNADVGGADIEYMYLIDEVTPIGGTLSIPQVIKSRAKIL). The interval 159–299 (VGREIYLGET…EDKWILEVVK (141 aa)) is C-terminal receptor-binding domain. An N-(acyl)-sphingosylphosphocholine contacts are provided by Lys187, Ser229, Tyr235, and Tyr284. Cys274 and Cys285 are joined by a disulfide.

This sequence belongs to the lysenin family. In terms of assembly, binds to sphingomyelin as a monomer by using its C-terminal domain. Forms a nonamer when sphingomyelin/LRP-2 ratio is lower than ca 500. Oligomerization, but not binding, is influenced by the fluidity of sphingomyelin. Expressed by coelomocytes.

The protein resides in the secreted. The protein localises to the target cell membrane. Pore-forming toxin that specifically binds sphingomyelin in the plasma membrane of various cells. Has hemolytic activity. It also has antibacterial activities against B.megaterium. This is Lysenin-related protein 2 from Eisenia fetida (Red wiggler worm).